The primary structure comprises 165 residues: MALRMWASSTANALKLSSSSRLHLSPTFSISRCFSNVLDGLKYAPSHEWVKHEGSVATIGITDHAQDHLGEVVFVELPEPGVSVTKGKGFGAVESVKATSDVNSPISGEVIEVNTGLTGKPGLINSSPYEDGWMIKIKPTSPDELESLLGAKEYTKFCEEEDAAH.

The N-terminal 34 residues, 1-34 (MALRMWASSTANALKLSSSSRLHLSPTFSISRCF), are a transit peptide targeting the mitochondrion. One can recognise a Lipoyl-binding domain in the interval 56–138 (VATIGITDHA…YEDGWMIKIK (83 aa)). The residue at position 97 (Lys-97) is an N6-lipoyllysine.

It belongs to the GcvH family. The glycine cleavage system is composed of four proteins: P, T, L and H. (R)-lipoate serves as cofactor.

Its subcellular location is the mitochondrion. Functionally, the glycine cleavage system catalyzes the degradation of glycine. The H protein shuttles the methylamine group of glycine from the P protein to the T protein. The polypeptide is Glycine cleavage system H protein, mitochondrial (GDCSH) (Pisum sativum (Garden pea)).